Consider the following 332-residue polypeptide: Glycerol-3-phosphate dehydrogenase [NAD(P)+] (332 aa).

NADPH is bound by residues Trp-13, Arg-33, and Lys-105. Lys-105, Gly-134, and Ser-136 together coordinate sn-glycerol 3-phosphate. Residue Ala-138 participates in NADPH binding. Residues Lys-189, Asp-242, Ser-252, Arg-253, and Asn-254 each contribute to the sn-glycerol 3-phosphate site. Lys-189 (proton acceptor) is an active-site residue. Arg-253 serves as a coordination point for NADPH. Residue Glu-279 coordinates NADPH.

This sequence belongs to the NAD-dependent glycerol-3-phosphate dehydrogenase family.

Its subcellular location is the cytoplasm. It carries out the reaction sn-glycerol 3-phosphate + NAD(+) = dihydroxyacetone phosphate + NADH + H(+). It catalyses the reaction sn-glycerol 3-phosphate + NADP(+) = dihydroxyacetone phosphate + NADPH + H(+). It participates in membrane lipid metabolism; glycerophospholipid metabolism. Catalyzes the reduction of the glycolytic intermediate dihydroxyacetone phosphate (DHAP) to sn-glycerol 3-phosphate (G3P), the key precursor for phospholipid synthesis. This is Glycerol-3-phosphate dehydrogenase [NAD(P)+] from Halorhodospira halophila (strain DSM 244 / SL1) (Ectothiorhodospira halophila (strain DSM 244 / SL1)).